We begin with the raw amino-acid sequence, 180 residues long: UPF0743 protein C215.06c (180 aa).

2 C2HC LYAR-type zinc fingers span residues 1 to 26 (MVSF…SRCH) and 27 to 51 (GAYF…TSCM). Residues Cys6, Cys9, His21, Cys25, Cys32, Cys35, His47, and Cys50 each contribute to the Zn(2+) site. The interval 61–125 (LYRPTKKELK…KETVSSPAEQ (65 aa)) is disordered. The span at 77 to 95 (NAVNSKELSPNTDNQNTPA) shows a compositional bias: polar residues. Ser85 bears the Phosphoserine mark. Over residues 100–111 (HSLDENEKDKEN) the composition is skewed to basic and acidic residues.

The protein belongs to the UPF0743 family.

The protein localises to the nucleus. This Schizosaccharomyces pombe (strain 972 / ATCC 24843) (Fission yeast) protein is UPF0743 protein C215.06c.